The primary structure comprises 216 residues: Probable GTP-binding protein EngB (216 aa).

The region spanning A24–E205 is the EngB-type G domain. GTP is bound by residues G32–S39, G59–A63, D86–G89, T153–D156, and F184–A186. Positions 39 and 61 each coordinate Mg(2+).

Belongs to the TRAFAC class TrmE-Era-EngA-EngB-Septin-like GTPase superfamily. EngB GTPase family. The cofactor is Mg(2+).

Functionally, necessary for normal cell division and for the maintenance of normal septation. This is Probable GTP-binding protein EngB from Anaeromyxobacter dehalogenans (strain 2CP-C).